The sequence spans 593 residues: Arginine--tRNA ligase (593 aa).

Residues 123 to 133 (PNVAKPMHVGH) carry the 'HIGH' region motif.

It belongs to the class-I aminoacyl-tRNA synthetase family. As to quaternary structure, monomer.

It is found in the cytoplasm. The catalysed reaction is tRNA(Arg) + L-arginine + ATP = L-arginyl-tRNA(Arg) + AMP + diphosphate. The polypeptide is Arginine--tRNA ligase (Phenylobacterium zucineum (strain HLK1)).